The primary structure comprises 682 residues: Histone deacetylase 18 (682 aa).

The interval Lys-59 to Glu-382 is histone deacetylase. The Proton donor/acceptor role is filled by His-191. Zn(2+) is bound by residues Asp-231, His-233, and Asp-324. Positions Ser-430–Arg-608 form a coiled coil.

Belongs to the histone deacetylase family. HD type 2 subfamily. Requires Zn(2+) as cofactor. In terms of tissue distribution, expressed in roots, stems, young rosette leaves, flowers and siliques.

The protein localises to the nucleus. Its subcellular location is the cytoplasm. The catalysed reaction is N(6)-acetyl-L-lysyl-[histone] + H2O = L-lysyl-[histone] + acetate. Its function is as follows. Responsible for the deacetylation of lysine residues on the N-terminal part of the core histones (H2A, H2B, H3 and H4). Histone deacetylation gives a tag for epigenetic repression and plays an important role in transcriptional regulation, cell cycle progression and developmental events. Histone deacetylases act via the formation of large multiprotein complexes. Required for appropriate cellular patterning in the root epidermis. Involved in the differentiation of hair and non-hair cells in the root epidermis. Is not directly involved in the regulation of the expression of pattern genes. Regulates the transcription of certain kinase genes, which are components of a positional information relay system, by changing their histone acetylation status. This Arabidopsis thaliana (Mouse-ear cress) protein is Histone deacetylase 18.